A 108-amino-acid polypeptide reads, in one-letter code: ATP-dependent Clp protease adapter protein ClpS (108 aa).

The protein belongs to the ClpS family. Binds to the N-terminal domain of the chaperone ClpA.

Involved in the modulation of the specificity of the ClpAP-mediated ATP-dependent protein degradation. The sequence is that of ATP-dependent Clp protease adapter protein ClpS from Cupriavidus necator (strain ATCC 17699 / DSM 428 / KCTC 22496 / NCIMB 10442 / H16 / Stanier 337) (Ralstonia eutropha).